We begin with the raw amino-acid sequence, 432 residues long: Adenylosuccinate synthetase (432 aa).

Residues 13–19 and 41–43 contribute to the GTP site; these read GDEGKGK and GHT. Asp-14 (proton acceptor) is an active-site residue. Mg(2+)-binding residues include Asp-14 and Gly-41. Residues 14 to 17, 39 to 42, Thr-131, Arg-145, Gln-226, Thr-241, and Arg-305 contribute to the IMP site; these read DEGK and NAGH. The active-site Proton donor is His-42. 301–307 is a binding site for substrate; it reads SVTGRAR. GTP contacts are provided by residues Arg-307, 333-335, and 416-418; these read KLD and STG.

The protein belongs to the adenylosuccinate synthetase family. In terms of assembly, homodimer. It depends on Mg(2+) as a cofactor.

The protein resides in the cytoplasm. The enzyme catalyses IMP + L-aspartate + GTP = N(6)-(1,2-dicarboxyethyl)-AMP + GDP + phosphate + 2 H(+). It participates in purine metabolism; AMP biosynthesis via de novo pathway; AMP from IMP: step 1/2. Its function is as follows. Plays an important role in the de novo pathway of purine nucleotide biosynthesis. Catalyzes the first committed step in the biosynthesis of AMP from IMP. The chain is Adenylosuccinate synthetase from Neisseria meningitidis serogroup A / serotype 4A (strain DSM 15465 / Z2491).